Consider the following 442-residue polypeptide: tRNA modification GTPase MnmE (442 aa).

(6S)-5-formyl-5,6,7,8-tetrahydrofolate is bound by residues Arg-27, Glu-84, and Lys-124. The region spanning 221–366 (GLHVVIVGAP…LLDALQAFAE (146 aa)) is the TrmE-type G domain. Residues 231–236 (NAGKSS), 250–256 (SEEAGTT), and 275–278 (DTAG) contribute to the GTP site. The Mg(2+) site is built by Ser-235 and Thr-256. Residue Lys-442 participates in (6S)-5-formyl-5,6,7,8-tetrahydrofolate binding.

It belongs to the TRAFAC class TrmE-Era-EngA-EngB-Septin-like GTPase superfamily. TrmE GTPase family. As to quaternary structure, homodimer. Heterotetramer of two MnmE and two MnmG subunits. K(+) serves as cofactor.

The protein localises to the cytoplasm. Its function is as follows. Exhibits a very high intrinsic GTPase hydrolysis rate. Involved in the addition of a carboxymethylaminomethyl (cmnm) group at the wobble position (U34) of certain tRNAs, forming tRNA-cmnm(5)s(2)U34. This is tRNA modification GTPase MnmE from Brucella ovis (strain ATCC 25840 / 63/290 / NCTC 10512).